Reading from the N-terminus, the 540-residue chain is Telomerase Cajal body protein 1 (540 aa).

The span at 1–10 (MKTPEAPPLA) shows a compositional bias: pro residues. The disordered stretch occupies residues 1 to 126 (MKTPEAPPLA…GEDVEGVSEE (126 aa)). Phosphoserine is present on residues Ser-26, Ser-30, Ser-54, Ser-64, Ser-85, and Ser-90. Residues 116–126 (PGEDVEGVSEE) show a composition bias toward acidic residues. WD repeat units follow at residues 158 to 197 (QPEN…YNEG), 213 to 258 (EGDT…LRAS), 263 to 304 (NHLD…RDCE), 314 to 355 (GQSG…ALLG), 356 to 396 (GHQG…HPLW), and 402 to 441 (VTTN…LESK). The residue at position 480 (Thr-480) is a Phosphothreonine. Position 482 is a phosphoserine (Ser-482). The disordered stretch occupies residues 520–540 (SDAHQEEMGQGRTEGGGGEFT). The segment covering 531 to 540 (RTEGGGGEFT) has biased composition (gly residues).

This sequence belongs to the TCAB1 family. As to quaternary structure, component of the telomerase holoenzyme complex composed of one molecule of TERT, one molecule of WRAP53/TCAB1, two molecules of H/ACA ribonucleoprotein complex subunits DKC1, NOP10, NHP2 and GAR1, and a telomerase RNA template component (TERC). The telomerase holoenzyme complex is associated with TEP1, SMG6/EST1A and POT1. Interacts with the chaperonin-containing T-complex (TRiC) complex; which mediates the folding of WRAP53/TCAB1. Interacts with COIL. Interacts with SMN1. Interacts with RNF8. Interacts with histone H2AX. In terms of processing, phosphorylated at Ser-64 by ATM in response to DNA damage, promoting its interaction with histone H2AX and localization to sites of DNA double-strand breaks.

It is found in the nucleus. Its subcellular location is the cajal body. It localises to the chromosome. The protein resides in the telomere. Functionally, RNA chaperone that plays a key role in telomere maintenance and RNA localization to Cajal bodies. Specifically recognizes and binds the Cajal body box (CAB box) present in both small Cajal body RNAs (scaRNAs) and telomerase RNA template component (TERC). Essential component of the telomerase holoenzyme complex, a ribonucleoprotein complex essential for the replication of chromosome termini that elongates telomeres in most eukaryotes. In the telomerase holoenzyme complex, required to stimulate the catalytic activity of the complex. Acts by specifically binding the CAB box of the TERC RNA and controlling the folding of the CR4/CR5 region of the TERC RNA, a critical step for telomerase activity. In addition, also controls telomerase holoenzyme complex localization to Cajal body. During S phase, required for delivery of TERC to telomeres during S phase and for telomerase activity. In addition to its role in telomere maintenance, also required for Cajal body formation, probably by mediating localization of scaRNAs to Cajal bodies. Also plays a role in DNA repair: phosphorylated by ATM in response to DNA damage and relocalizes to sites of DNA double-strand breaks to promote the repair of DNA double-strand breaks. Acts by recruiting the ubiquitin ligase RNF8 to DNA breaks and promote both homologous recombination (HR) and non-homologous end joining (NHEJ). This chain is Telomerase Cajal body protein 1, found in Bos taurus (Bovine).